We begin with the raw amino-acid sequence, 429 residues long: Xaa-Pro dipeptidase (429 aa).

D241, D252, H334, E372, and E411 together coordinate Mn(2+).

It belongs to the peptidase M24B family. Bacterial-type prolidase subfamily. Requires Mn(2+) as cofactor.

The enzyme catalyses Xaa-L-Pro dipeptide + H2O = an L-alpha-amino acid + L-proline. In terms of biological role, splits dipeptides with a prolyl residue in the C-terminal position. The chain is Xaa-Pro dipeptidase from Marinobacter nauticus (strain ATCC 700491 / DSM 11845 / VT8) (Marinobacter aquaeolei).